A 106-amino-acid polypeptide reads, in one-letter code: Ribonuclease P protein component 4 (106 aa).

Positions 57, 60, 83, and 86 each coordinate Zn(2+).

It belongs to the eukaryotic/archaeal RNase P protein component 4 family. Consists of a catalytic RNA component and at least 4-5 protein subunits. It depends on Zn(2+) as a cofactor.

Its subcellular location is the cytoplasm. It catalyses the reaction Endonucleolytic cleavage of RNA, removing 5'-extranucleotides from tRNA precursor.. Functionally, part of ribonuclease P, a protein complex that generates mature tRNA molecules by cleaving their 5'-ends. This is Ribonuclease P protein component 4 from Saccharolobus solfataricus (strain ATCC 35092 / DSM 1617 / JCM 11322 / P2) (Sulfolobus solfataricus).